The primary structure comprises 318 residues: Fibronectin type III domain-containing protein 11 (318 aa).

Residues 210 to 307 (VVFDRKASAA…DSLTLHTKPE (98 aa)) form the Fibronectin type-III domain.

This is Fibronectin type III domain-containing protein 11 (FNDC11) from Homo sapiens (Human).